The following is a 279-amino-acid chain: Pantothenate synthetase (279 aa).

27 to 34 (MGYLHEGH) contributes to the ATP binding site. Histidine 34 (proton donor) is an active-site residue. Glutamine 58 contributes to the (R)-pantoate binding site. Residue glutamine 58 participates in beta-alanine binding. Residue 144-147 (GKKD) participates in ATP binding. Glutamine 150 lines the (R)-pantoate pocket. ATP contacts are provided by residues valine 173 and 181-184 (MSSR).

It belongs to the pantothenate synthetase family. In terms of assembly, homodimer.

It is found in the cytoplasm. It carries out the reaction (R)-pantoate + beta-alanine + ATP = (R)-pantothenate + AMP + diphosphate + H(+). It participates in cofactor biosynthesis; (R)-pantothenate biosynthesis; (R)-pantothenate from (R)-pantoate and beta-alanine: step 1/1. In terms of biological role, catalyzes the condensation of pantoate with beta-alanine in an ATP-dependent reaction via a pantoyl-adenylate intermediate. The chain is Pantothenate synthetase from Citrifermentans bemidjiense (strain ATCC BAA-1014 / DSM 16622 / JCM 12645 / Bem) (Geobacter bemidjiensis).